The sequence spans 98 residues: Class II hydrophobin 5 (98 aa).

Positions 1 to 17 (MQFSLALVTLLATAVSA) are cleaved as a signal peptide. 4 disulfides stabilise this stretch: Cys-30–Cys-78, Cys-39–Cys-69, Cys-40–Cys-52, and Cys-79–Cys-90.

The protein belongs to the cerato-ulmin hydrophobin family.

It is found in the secreted. It localises to the cell wall. In terms of biological role, aerial growth, conidiation, and dispersal of filamentous fungi in the environment rely upon a capability of their secreting small amphipathic proteins called hydrophobins (HPBs) with low sequence identity. Class I can self-assemble into an outermost layer of rodlet bundles on aerial cell surfaces, conferring cellular hydrophobicity that supports fungal growth, development and dispersal; whereas Class II form highly ordered films at water-air interfaces through intermolecular interactions but contribute nothing to the rodlet structure. Does not seem to be important for the ability to cause seedling disease. This chain is Class II hydrophobin 5, found in Gibberella moniliformis (Maize ear and stalk rot fungus).